The primary structure comprises 216 residues: Ras-related protein Rab-5C (216 aa).

GTP-binding residues include Ser-30, Ala-31, Gly-33, Lys-34, Ser-35, Ser-36, His-47, Glu-48, Thr-53, Gly-79, Asn-134, Lys-135, Asp-137, Ala-165, and Lys-166. Ser-35 lines the Mg(2+) pocket. Short sequence motifs (switch) lie at residues Gln-45 to Ala-57 and Ala-78 to Ala-94. Residue Thr-53 participates in Mg(2+) binding. A disordered region spans residues Lys-184–Asn-216. Residues Gln-203–Asn-216 show a composition bias toward polar residues. S-geranylgeranyl cysteine attachment occurs at residues Cys-213 and Cys-214.

Belongs to the small GTPase superfamily. Rab family. Mg(2+) is required as a cofactor. Detected in brain, ovary, rectum, small intestine, large intestine, liver, spleen, follicle and kidney (at protein level).

It localises to the cell membrane. The protein localises to the early endosome membrane. It catalyses the reaction GTP + H2O = GDP + phosphate + H(+). Regulated by guanine nucleotide exchange factors (GEFs) which promote the exchange of bound GDP for free GTP. Regulated by GTPase activating proteins (GAPs) which increase the GTP hydrolysis activity. Inhibited by GDP dissociation inhibitors (GDIs). Its function is as follows. The small GTPases Rab are key regulators of intracellular membrane trafficking, from the formation of transport vesicles to their fusion with membranes. Rabs cycle between an inactive GDP-bound form and an active GTP-bound form that is able to recruit to membranes different sets of downstream effectors directly responsible for vesicle formation, movement, tethering and fusion. In Gallus gallus (Chicken), this protein is Ras-related protein Rab-5C (RAB5C).